Reading from the N-terminus, the 322-residue chain is HPr kinase/phosphorylase (322 aa).

Active-site residues include His146 and Lys167. ATP is bound at residue 161 to 168 (GDSGLGKS). Ser168 provides a ligand contact to Mg(2+). Asp185 (proton acceptor; for phosphorylation activity. Proton donor; for dephosphorylation activity) is an active-site residue. An important for the catalytic mechanism of both phosphorylation and dephosphorylation region spans residues 209-218 (LEVRGLGLLD). Residue Glu210 coordinates Mg(2+). Arg250 is a catalytic residue. The segment at 271–276 (QVAAGR) is important for the catalytic mechanism of dephosphorylation.

It belongs to the HPrK/P family. Homohexamer. Requires Mg(2+) as cofactor.

The catalysed reaction is [HPr protein]-L-serine + ATP = [HPr protein]-O-phospho-L-serine + ADP + H(+). It carries out the reaction [HPr protein]-O-phospho-L-serine + phosphate + H(+) = [HPr protein]-L-serine + diphosphate. Its function is as follows. Catalyzes the ATP- as well as the pyrophosphate-dependent phosphorylation of a specific serine residue in HPr, a phosphocarrier protein of the phosphoenolpyruvate-dependent sugar phosphotransferase system (PTS). HprK/P also catalyzes the pyrophosphate-producing, inorganic phosphate-dependent dephosphorylation (phosphorolysis) of seryl-phosphorylated HPr (P-Ser-HPr). This Paraburkholderia phytofirmans (strain DSM 17436 / LMG 22146 / PsJN) (Burkholderia phytofirmans) protein is HPr kinase/phosphorylase.